The sequence spans 335 residues: Eukaryotic translation initiation factor 3 subunit H-A (335 aa).

The MPN domain maps to I22–L156. The span at Q254–Q272 shows a compositional bias: low complexity. The segment at Q254–E282 is disordered.

This sequence belongs to the eIF-3 subunit H family. In terms of assembly, component of the eukaryotic translation initiation factor 3 (eIF-3) complex, which is composed of 13 subunits: eif3a, eif3b, eif3c, eif3d, eif3e, eif3f, eif3g, eif3h, eif3i, eif3j, eif3k, eif3l and eif3m.

It localises to the cytoplasm. In terms of biological role, component of the eukaryotic translation initiation factor 3 (eIF-3) complex, which is involved in protein synthesis of a specialized repertoire of mRNAs and, together with other initiation factors, stimulates binding of mRNA and methionyl-tRNAi to the 40S ribosome. The eIF-3 complex specifically targets and initiates translation of a subset of mRNAs involved in cell proliferation. This is Eukaryotic translation initiation factor 3 subunit H-A (eif3ha) from Danio rerio (Zebrafish).